Here is a 186-residue protein sequence, read N- to C-terminus: Protein GrpE (186 aa).

Basic and acidic residues-rich tracts occupy residues methionine 1–histidine 13 and glutamate 23–histidine 34. Positions methionine 1 to histidine 34 are disordered.

This sequence belongs to the GrpE family. As to quaternary structure, homodimer.

Its subcellular location is the cytoplasm. Participates actively in the response to hyperosmotic and heat shock by preventing the aggregation of stress-denatured proteins, in association with DnaK and GrpE. It is the nucleotide exchange factor for DnaK and may function as a thermosensor. Unfolded proteins bind initially to DnaJ; upon interaction with the DnaJ-bound protein, DnaK hydrolyzes its bound ATP, resulting in the formation of a stable complex. GrpE releases ADP from DnaK; ATP binding to DnaK triggers the release of the substrate protein, thus completing the reaction cycle. Several rounds of ATP-dependent interactions between DnaJ, DnaK and GrpE are required for fully efficient folding. In Hydrogenovibrio crunogenus (strain DSM 25203 / XCL-2) (Thiomicrospira crunogena), this protein is Protein GrpE.